Reading from the N-terminus, the 380-residue chain is tRNA-specific 2-thiouridylase MnmA (380 aa).

ATP contacts are provided by residues 14–21 (GLSGGVDS) and Met-40. The segment at 100–102 (NPD) is interaction with target base in tRNA. The active-site Nucleophile is the Cys-105. Cys-105 and Cys-203 are disulfide-bonded. Gly-129 is a binding site for ATP. An interaction with tRNA region spans residues 153–155 (KDQ). Residue Cys-203 is the Cysteine persulfide intermediate of the active site. The interaction with tRNA stretch occupies residues 322–323 (RY).

The protein belongs to the MnmA/TRMU family.

It localises to the cytoplasm. The catalysed reaction is S-sulfanyl-L-cysteinyl-[protein] + uridine(34) in tRNA + AH2 + ATP = 2-thiouridine(34) in tRNA + L-cysteinyl-[protein] + A + AMP + diphosphate + H(+). Catalyzes the 2-thiolation of uridine at the wobble position (U34) of tRNA, leading to the formation of s(2)U34. This is tRNA-specific 2-thiouridylase MnmA from Leptothrix cholodnii (strain ATCC 51168 / LMG 8142 / SP-6) (Leptothrix discophora (strain SP-6)).